The primary structure comprises 522 residues: Type-2 serine--tRNA ligase (522 aa).

Position 319 (Ala-319) interacts with L-serine. Cys-321 contributes to the Zn(2+) binding site. Arg-350 provides a ligand contact to L-serine. Residues 350–352 (RWE) and 361–362 (RV) each bind ATP. 367-369 (RIE) contacts L-serine. Glu-369 and Cys-476 together coordinate Zn(2+). Arg-483 contacts ATP.

It belongs to the class-II aminoacyl-tRNA synthetase family. Type-2 seryl-tRNA synthetase subfamily. Homodimer. It depends on Zn(2+) as a cofactor.

Its subcellular location is the cytoplasm. It carries out the reaction tRNA(Ser) + L-serine + ATP = L-seryl-tRNA(Ser) + AMP + diphosphate + H(+). It catalyses the reaction tRNA(Sec) + L-serine + ATP = L-seryl-tRNA(Sec) + AMP + diphosphate + H(+). It participates in aminoacyl-tRNA biosynthesis; selenocysteinyl-tRNA(Sec) biosynthesis; L-seryl-tRNA(Sec) from L-serine and tRNA(Sec): step 1/1. In terms of biological role, catalyzes the attachment of serine to tRNA(Ser). Is also able to aminoacylate tRNA(Sec) with serine, to form the misacylated tRNA L-seryl-tRNA(Sec), which will be further converted into selenocysteinyl-tRNA(Sec). The polypeptide is Type-2 serine--tRNA ligase (serS) (Methanococcus aeolicus (strain ATCC BAA-1280 / DSM 17508 / OCM 812 / Nankai-3)).